The sequence spans 235 residues: Aspartate/glutamate leucyltransferase (235 aa).

It belongs to the R-transferase family. Bpt subfamily.

It is found in the cytoplasm. It catalyses the reaction N-terminal L-glutamyl-[protein] + L-leucyl-tRNA(Leu) = N-terminal L-leucyl-L-glutamyl-[protein] + tRNA(Leu) + H(+). The catalysed reaction is N-terminal L-aspartyl-[protein] + L-leucyl-tRNA(Leu) = N-terminal L-leucyl-L-aspartyl-[protein] + tRNA(Leu) + H(+). Its function is as follows. Functions in the N-end rule pathway of protein degradation where it conjugates Leu from its aminoacyl-tRNA to the N-termini of proteins containing an N-terminal aspartate or glutamate. The polypeptide is Aspartate/glutamate leucyltransferase (Pseudomonas putida (strain W619)).